The sequence spans 349 residues: tRNA N6-adenosine threonylcarbamoyltransferase (349 aa).

Fe cation is bound by residues histidine 118 and histidine 122. Substrate contacts are provided by residues 141–145, aspartate 174, glycine 187, and asparagine 280; that span reads LVSGG. Aspartate 308 serves as a coordination point for Fe cation.

This sequence belongs to the KAE1 / TsaD family. Fe(2+) is required as a cofactor.

It is found in the cytoplasm. The catalysed reaction is L-threonylcarbamoyladenylate + adenosine(37) in tRNA = N(6)-L-threonylcarbamoyladenosine(37) in tRNA + AMP + H(+). Required for the formation of a threonylcarbamoyl group on adenosine at position 37 (t(6)A37) in tRNAs that read codons beginning with adenine. Is involved in the transfer of the threonylcarbamoyl moiety of threonylcarbamoyl-AMP (TC-AMP) to the N6 group of A37, together with TsaE and TsaB. TsaD likely plays a direct catalytic role in this reaction. This Acidovorax sp. (strain JS42) protein is tRNA N6-adenosine threonylcarbamoyltransferase.